The following is a 448-amino-acid chain: Exodeoxyribonuclease 7 large subunit (448 aa).

Belongs to the XseA family. Heterooligomer composed of large and small subunits.

It localises to the cytoplasm. The catalysed reaction is Exonucleolytic cleavage in either 5'- to 3'- or 3'- to 5'-direction to yield nucleoside 5'-phosphates.. Functionally, bidirectionally degrades single-stranded DNA into large acid-insoluble oligonucleotides, which are then degraded further into small acid-soluble oligonucleotides. The protein is Exodeoxyribonuclease 7 large subunit of Shewanella sp. (strain MR-7).